A 258-amino-acid polypeptide reads, in one-letter code: Snake venom serine protease 1 (258 aa).

An N-terminal signal peptide occupies residues 1 to 18 (MVLIRVLANLLILQLSYA). Positions 19–24 (QKSSEL) are excised as a propeptide. A Peptidase S1 domain is found at 25-249 (VVGGDECNIN…YNDWIKSIIA (225 aa)). Cystine bridges form between Cys-31-Cys-163, Cys-50-Cys-66, Cys-98-Cys-256, Cys-142-Cys-210, Cys-174-Cys-189, and Cys-200-Cys-225. Asn-44 carries N-linked (GlcNAc...) asparagine glycosylation. Catalysis depends on charge relay system residues His-65 and Asp-110. The Charge relay system role is filled by Ser-204.

It belongs to the peptidase S1 family. Snake venom subfamily. Monomer. As to expression, expressed by the venom gland.

The protein localises to the secreted. Snake venom serine protease that may act in the hemostasis system of the prey. The sequence is that of Snake venom serine protease 1 (TLG1) from Craspedocephalus gramineus (Bamboo pit viper).